Here is a 366-residue protein sequence, read N- to C-terminus: UDP-N-acetylglucosamine--N-acetylmuramyl-(pentapeptide) pyrophosphoryl-undecaprenol N-acetylglucosamine transferase (366 aa).

Residues 10–12 (TGG), N124, S195, and Q295 contribute to the UDP-N-acetyl-alpha-D-glucosamine site.

The protein belongs to the glycosyltransferase 28 family. MurG subfamily.

The protein localises to the cell membrane. The enzyme catalyses di-trans,octa-cis-undecaprenyl diphospho-N-acetyl-alpha-D-muramoyl-L-alanyl-D-glutamyl-meso-2,6-diaminopimeloyl-D-alanyl-D-alanine + UDP-N-acetyl-alpha-D-glucosamine = di-trans,octa-cis-undecaprenyl diphospho-[N-acetyl-alpha-D-glucosaminyl-(1-&gt;4)]-N-acetyl-alpha-D-muramoyl-L-alanyl-D-glutamyl-meso-2,6-diaminopimeloyl-D-alanyl-D-alanine + UDP + H(+). Its pathway is cell wall biogenesis; peptidoglycan biosynthesis. Its function is as follows. Cell wall formation. Catalyzes the transfer of a GlcNAc subunit on undecaprenyl-pyrophosphoryl-MurNAc-pentapeptide (lipid intermediate I) to form undecaprenyl-pyrophosphoryl-MurNAc-(pentapeptide)GlcNAc (lipid intermediate II). This Bacillus licheniformis (strain ATCC 14580 / DSM 13 / JCM 2505 / CCUG 7422 / NBRC 12200 / NCIMB 9375 / NCTC 10341 / NRRL NRS-1264 / Gibson 46) protein is UDP-N-acetylglucosamine--N-acetylmuramyl-(pentapeptide) pyrophosphoryl-undecaprenol N-acetylglucosamine transferase.